We begin with the raw amino-acid sequence, 79 residues long: Acyl carrier protein (79 aa).

The region spanning 2-77 (SDIGERVKKI…DATKFLEKNA (76 aa)) is the Carrier domain. O-(pantetheine 4'-phosphoryl)serine is present on Ser-37.

Belongs to the acyl carrier protein (ACP) family. 4'-phosphopantetheine is transferred from CoA to a specific serine of apo-ACP by AcpS. This modification is essential for activity because fatty acids are bound in thioester linkage to the sulfhydryl of the prosthetic group.

The protein localises to the cytoplasm. It functions in the pathway lipid metabolism; fatty acid biosynthesis. Its function is as follows. Carrier of the growing fatty acid chain in fatty acid biosynthesis. This is Acyl carrier protein from Bradyrhizobium diazoefficiens (strain JCM 10833 / BCRC 13528 / IAM 13628 / NBRC 14792 / USDA 110).